The primary structure comprises 408 residues: Multidrug resistance protein MdtG (408 aa).

The next 11 membrane-spanning stretches (helical) occupy residues 16 to 36 (LIVA…VMPF), 58 to 78 (IVFS…GGLA), 92 to 112 (LGMG…QFLI), 115 to 135 (ALLG…ATQV), 146 to 166 (TLST…GLLA), 173 to 193 (PVFF…LFCI), 224 to 244 (LFVT…ILTL), 256 to 276 (VAFI…LSAP), 290 to 310 (ILIT…YVQT), 319 to 339 (FLLG…LVYN), and 378 to 398 (AVFL…WNSL).

The protein belongs to the major facilitator superfamily. DHA1 family. MdtG (TC 2.A.1.2.20) subfamily.

It localises to the cell inner membrane. Confers resistance to fosfomycin and deoxycholate. This chain is Multidrug resistance protein MdtG, found in Escherichia coli O139:H28 (strain E24377A / ETEC).